Reading from the N-terminus, the 1107-residue chain is DNA-directed RNA polymerase subunit beta (1107 aa).

The segment covering D1062 to G1075 has biased composition (basic and acidic residues). A disordered region spans residues D1062–N1081.

It belongs to the RNA polymerase beta chain family. In terms of assembly, the RNAP catalytic core consists of 2 alpha, 1 beta, 1 beta' and 1 omega subunit. When a sigma factor is associated with the core the holoenzyme is formed, which can initiate transcription.

The enzyme catalyses RNA(n) + a ribonucleoside 5'-triphosphate = RNA(n+1) + diphosphate. DNA-dependent RNA polymerase catalyzes the transcription of DNA into RNA using the four ribonucleoside triphosphates as substrates. The sequence is that of DNA-directed RNA polymerase subunit beta from Syntrophomonas wolfei subsp. wolfei (strain DSM 2245B / Goettingen).